The chain runs to 215 residues: ATP-dependent dethiobiotin synthetase BioD (215 aa).

13–18 (DIGKTV) serves as a coordination point for ATP. Residue threonine 17 participates in Mg(2+) binding. Lysine 38 is a catalytic residue. Threonine 42 contacts substrate. ATP is bound by residues aspartate 50, 115–118 (EGAG), and 175–176 (NH). 2 residues coordinate Mg(2+): aspartate 50 and glutamate 115.

The protein belongs to the dethiobiotin synthetase family. As to quaternary structure, homodimer. It depends on Mg(2+) as a cofactor.

Its subcellular location is the cytoplasm. The enzyme catalyses (7R,8S)-7,8-diammoniononanoate + CO2 + ATP = (4R,5S)-dethiobiotin + ADP + phosphate + 3 H(+). Its pathway is cofactor biosynthesis; biotin biosynthesis; biotin from 7,8-diaminononanoate: step 1/2. Catalyzes a mechanistically unusual reaction, the ATP-dependent insertion of CO2 between the N7 and N8 nitrogen atoms of 7,8-diaminopelargonic acid (DAPA, also called 7,8-diammoniononanoate) to form a ureido ring. The polypeptide is ATP-dependent dethiobiotin synthetase BioD (Neisseria gonorrhoeae (strain NCCP11945)).